The primary structure comprises 421 residues: uncharacterized protein (421 aa).

2 coiled-coil regions span residues 126–182 (YART…IQKI) and 328–397 (YQVE…RLTL).

This is an uncharacterized protein from Treponema pallidum (strain Nichols).